The following is a 520-amino-acid chain: Cholesterol side-chain cleavage enzyme, mitochondrial (520 aa).

The N-terminal 39 residues, Met-1–Gly-39, are a transit peptide targeting the mitochondrion. Cys-461 is a binding site for heme.

The protein belongs to the cytochrome P450 family. As to quaternary structure, interacts with FDX1/adrenodoxin. The cofactor is heme. As to expression, detected in adrenal cortex and corpus luteum (at protein level).

The protein resides in the mitochondrion inner membrane. It carries out the reaction 6 reduced [adrenodoxin] + cholesterol + 3 O2 + 6 H(+) = 4-methylpentanal + pregnenolone + 6 oxidized [adrenodoxin] + 4 H2O. The enzyme catalyses 2 reduced [adrenodoxin] + cholesterol + O2 + 2 H(+) = (22R)-hydroxycholesterol + 2 oxidized [adrenodoxin] + H2O. It catalyses the reaction (22R)-hydroxycholesterol + 2 reduced [adrenodoxin] + O2 + 2 H(+) = (20R,22R)-20,22-dihydroxycholesterol + 2 oxidized [adrenodoxin] + H2O. The catalysed reaction is (20R,22R)-20,22-dihydroxycholesterol + 2 reduced [adrenodoxin] + O2 + 2 H(+) = 4-methylpentanal + pregnenolone + 2 oxidized [adrenodoxin] + 2 H2O. The protein operates within lipid metabolism; C21-steroid hormone metabolism. Its pathway is steroid metabolism; cholesterol metabolism. A cytochrome P450 monooxygenase that catalyzes the side-chain hydroxylation and cleavage of cholesterol to pregnenolone, the precursor of most steroid hormones. Catalyzes three sequential oxidation reactions of cholesterol, namely the hydroxylation at C22 followed with the hydroxylation at C20 to yield 20R,22R-hydroxycholesterol that is further cleaved between C20 and C22 to yield the C21-steroid pregnenolone and 4-methylpentanal. Mechanistically, uses molecular oxygen inserting one oxygen atom into a substrate and reducing the second into a water molecule. Two electrons are provided by NADPH via a two-protein mitochondrial transfer system comprising flavoprotein FDXR (adrenodoxin/ferredoxin reductase) and nonheme iron-sulfur protein FDX1 or FDX2 (adrenodoxin/ferredoxin). This chain is Cholesterol side-chain cleavage enzyme, mitochondrial (CYP11A1), found in Bos taurus (Bovine).